We begin with the raw amino-acid sequence, 174 residues long: Peptide methionine sulfoxide reductase MsrA (174 aa).

Cys11 is a catalytic residue.

This sequence belongs to the MsrA Met sulfoxide reductase family.

The enzyme catalyses L-methionyl-[protein] + [thioredoxin]-disulfide + H2O = L-methionyl-(S)-S-oxide-[protein] + [thioredoxin]-dithiol. The catalysed reaction is [thioredoxin]-disulfide + L-methionine + H2O = L-methionine (S)-S-oxide + [thioredoxin]-dithiol. In terms of biological role, has an important function as a repair enzyme for proteins that have been inactivated by oxidation. Catalyzes the reversible oxidation-reduction of methionine sulfoxide in proteins to methionine. This is Peptide methionine sulfoxide reductase MsrA from Pasteurella multocida (strain Pm70).